We begin with the raw amino-acid sequence, 394 residues long: Aspergillopepsin-1 (394 aa).

Residues Met-1–Ala-20 form the signal peptide. Residues Ala-21 to Ala-69 constitute a propeptide, activation peptide. The Peptidase A1 domain maps to Tyr-85–Ala-391. Asp-101 is a catalytic residue. 2 O-linked (Man...) serine glycosylation sites follow: Ser-129 and Ser-304. A disulfide bridge links Cys-319 with Cys-354.

It belongs to the peptidase A1 family. As to quaternary structure, monomer.

It is found in the secreted. It carries out the reaction Hydrolysis of proteins with broad specificity. Generally favors hydrophobic residues in P1 and P1', but also accepts Lys in P1, which leads to activation of trypsinogen. Does not clot milk.. In terms of biological role, secreted aspartic endopeptidase that allows assimilation of proteinaceous substrates. The scissile peptide bond is attacked by a nucleophilic water molecule activated by two aspartic residues in the active site. Shows a broad primary substrate specificity. Favors hydrophobic residues at the P1 and P1' positions, but also accepts a lysine residue in the P1 position, leading to the activation of trypsinogen and chymotrypsinogen A. In Aspergillus phoenicis (Aspergillus saitoi), this protein is Aspergillopepsin-1 (pepA).